We begin with the raw amino-acid sequence, 307 residues long: tRNA(Met) cytidine acetate ligase (307 aa).

Residues 12-25 (VVEY…HIYQ), Gly106, Asn163, and Arg188 each bind ATP.

It belongs to the TmcAL family.

It localises to the cytoplasm. The enzyme catalyses cytidine(34) in elongator tRNA(Met) + acetate + ATP = N(4)-acetylcytidine(34) in elongator tRNA(Met) + AMP + diphosphate. Functionally, catalyzes the formation of N(4)-acetylcytidine (ac(4)C) at the wobble position of elongator tRNA(Met), using acetate and ATP as substrates. First activates an acetate ion to form acetyladenylate (Ac-AMP) and then transfers the acetyl group to tRNA to form ac(4)C34. This chain is tRNA(Met) cytidine acetate ligase, found in Mycoplasmopsis synoviae (strain 53) (Mycoplasma synoviae).